A 971-amino-acid chain; its full sequence is Translation initiation factor IF-2 (971 aa).

Residues 49-63 (HLRKSHGATDGDKRK) show a composition bias toward basic and acidic residues. 2 disordered regions span residues 49-85 (HLRK…KART) and 99-386 (RDDV…PTEP). Over residues 105 to 114 (GAEQGQAQVA) the composition is skewed to low complexity. Over residues 121 to 181 (ELKRREEEAR…EEEAAAKRAA (61 aa)) the composition is skewed to basic and acidic residues. Low complexity predominate over residues 182-200 (AEAAAAQQAAAQQAAAEQE). Positions 209–260 (DEARAAAERAAQREAAKKAEDAAREAADKARAEQEEISKRRAAAEAEARAIR) are enriched in basic and acidic residues. Positions 303–325 (ARPAVKKPAGAAAPATTQAPAGA) are enriched in low complexity. Residues 355-368 (SSGGVDRGWRGGPK) show a composition bias toward gly residues. In terms of domain architecture, tr-type G spans 471-640 (PRPPVVTVMG…LLQAEVLELK (170 aa)). Residues 480-487 (GHVDHGKT) form a G1 region. 480 to 487 (GHVDHGKT) contributes to the GTP binding site. Residues 505 to 509 (GITQH) form a G2 region. The tract at residues 526-529 (DTPG) is G3. GTP-binding positions include 526-530 (DTPGH) and 580-583 (NKID). The interval 580–583 (NKID) is G4. Residues 616–618 (SAK) are G5.

Belongs to the TRAFAC class translation factor GTPase superfamily. Classic translation factor GTPase family. IF-2 subfamily.

The protein localises to the cytoplasm. In terms of biological role, one of the essential components for the initiation of protein synthesis. Protects formylmethionyl-tRNA from spontaneous hydrolysis and promotes its binding to the 30S ribosomal subunits. Also involved in the hydrolysis of GTP during the formation of the 70S ribosomal complex. In Burkholderia cenocepacia (strain ATCC BAA-245 / DSM 16553 / LMG 16656 / NCTC 13227 / J2315 / CF5610) (Burkholderia cepacia (strain J2315)), this protein is Translation initiation factor IF-2.